The chain runs to 347 residues: Phosphate acyltransferase (347 aa).

This sequence belongs to the PlsX family. As to quaternary structure, homodimer. Probably interacts with PlsY.

It is found in the cytoplasm. It carries out the reaction a fatty acyl-[ACP] + phosphate = an acyl phosphate + holo-[ACP]. Its pathway is lipid metabolism; phospholipid metabolism. Catalyzes the reversible formation of acyl-phosphate (acyl-PO(4)) from acyl-[acyl-carrier-protein] (acyl-ACP). This enzyme utilizes acyl-ACP as fatty acyl donor, but not acyl-CoA. This Oleidesulfovibrio alaskensis (strain ATCC BAA-1058 / DSM 17464 / G20) (Desulfovibrio alaskensis) protein is Phosphate acyltransferase.